Consider the following 274-residue polypeptide: 2-dehydro-3-deoxyphosphooctonate aldolase (274 aa).

The protein belongs to the KdsA family.

The protein resides in the cytoplasm. It catalyses the reaction D-arabinose 5-phosphate + phosphoenolpyruvate + H2O = 3-deoxy-alpha-D-manno-2-octulosonate-8-phosphate + phosphate. Its pathway is carbohydrate biosynthesis; 3-deoxy-D-manno-octulosonate biosynthesis; 3-deoxy-D-manno-octulosonate from D-ribulose 5-phosphate: step 2/3. It participates in bacterial outer membrane biogenesis; lipopolysaccharide biosynthesis. The sequence is that of 2-dehydro-3-deoxyphosphooctonate aldolase from Rickettsia rickettsii (strain Iowa).